Reading from the N-terminus, the 445-residue chain is Methylenetetrahydrofolate--tRNA-(uracil-5-)-methyltransferase TrmFO (445 aa).

Residue 8–13 (GAGLAG) participates in FAD binding.

This sequence belongs to the MnmG family. TrmFO subfamily. The cofactor is FAD.

It localises to the cytoplasm. The catalysed reaction is uridine(54) in tRNA + (6R)-5,10-methylene-5,6,7,8-tetrahydrofolate + NADH + H(+) = 5-methyluridine(54) in tRNA + (6S)-5,6,7,8-tetrahydrofolate + NAD(+). It catalyses the reaction uridine(54) in tRNA + (6R)-5,10-methylene-5,6,7,8-tetrahydrofolate + NADPH + H(+) = 5-methyluridine(54) in tRNA + (6S)-5,6,7,8-tetrahydrofolate + NADP(+). Catalyzes the folate-dependent formation of 5-methyl-uridine at position 54 (M-5-U54) in all tRNAs. This Rhodobacter capsulatus (strain ATCC BAA-309 / NBRC 16581 / SB1003) protein is Methylenetetrahydrofolate--tRNA-(uracil-5-)-methyltransferase TrmFO.